The primary structure comprises 1085 residues: SLIT-ROBO Rho GTPase-activating protein 1 (1085 aa).

The region spanning 19 to 314 is the F-BAR domain; that stretch reads SQVKEIRAQL…AVDNLEPRSD (296 aa). A coiled-coil region spans residues 351-390; that stretch reads VQAELMLRYQQLQSRLATLKIENEEVKKTTEATLQTIQDM. Serine 416 carries the phosphoserine modification. Positions 475 to 496 are disordered; it reads YMTTRPPNVPPKPQKHRKSRPR. The region spanning 506–694 is the Rho-GAP domain; it reads GDLETFVKDS…TIIIHHETIF (189 aa). The 60-residue stretch at 743-802 folds into the SH3 domain; that stretch reads CEPIEAIAKFDYVGRSARELSFKKGASLLLYHRASEDWWEGRHNGIDGLVPHQYIVVQDM. Residues 808-822 are compositionally biased toward polar residues; that stretch reads DTLSQKADSEASSGP. A disordered region spans residues 808–954; sequence DTLSQKADSE…TGFNDHKPLD (147 aa). Residues serine 835 and serine 917 each carry the phosphoserine modification. Over residues 922-931 the composition is skewed to basic and acidic residues; sequence SRHDSLKKID. Serine 932 bears the Phosphoserine mark. The span at 937–946 shows a compositional bias: polar residues; it reads RSTSSGQYTG. Residues 956–985 are a coiled coil; it reads ETIAQDIEETMNTALNELRELERQSTAKHA. The span at 997 to 1011 shows a compositional bias: polar residues; sequence KNSPTPATSTESLSP. 2 disordered regions span residues 997–1038 and 1051–1085; these read KNSP…MSTF and KPPA…SCTM. Residue serine 999 is modified to Phosphoserine. Phosphothreonine is present on threonine 1001. Low complexity predominate over residues 1027-1037; sequence STSSSSDTMST. Serine 1032 is modified (phosphoserine).

As to quaternary structure, homodimer. Forms a heterooligomer with SRGAP2 and SRGAP3 through its F-BAR domain. Interacts with ROBO1, CDC42 and RHOA. Interacts with FASLG. As to expression, expressed in brain, lung, kidney, and testis.

Its function is as follows. GTPase-activating protein for RhoA and Cdc42 small GTPases. Together with CDC42 seems to be involved in the pathway mediating the repulsive signaling of Robo and Slit proteins in neuronal migration. SLIT2, probably through interaction with ROBO1, increases the interaction of SRGAP1 with ROBO1 and inactivates CDC42. The sequence is that of SLIT-ROBO Rho GTPase-activating protein 1 (SRGAP1) from Homo sapiens (Human).